We begin with the raw amino-acid sequence, 126 residues long: Small ribosomal subunit protein eS8 (126 aa).

Over residues 1–10 (MAIWQGSSLR) the composition is skewed to polar residues. The segment at 1–35 (MAIWQGSSLRKPSGARSRRNKNKRNAEFGRNPAET) is disordered.

Belongs to the eukaryotic ribosomal protein eS8 family. In terms of assembly, part of the 30S ribosomal subunit.

This is Small ribosomal subunit protein eS8 from Methanosphaera stadtmanae (strain ATCC 43021 / DSM 3091 / JCM 11832 / MCB-3).